Consider the following 1826-residue polypeptide: 1,3-beta-glucan synthase component bgs3 (1826 aa).

Polar residues predominate over residues Q34–Q43. The interval Q34 to D90 is disordered. The segment covering D59–D75 has biased composition (acidic residues). A run of 7 helical transmembrane segments spans residues I427–Y447, W465–L485, L504–F524, F543–G563, A597–L617, F637–L657, and L660–I680. Phosphoserine is present on S885. A run of 11 helical transmembrane segments spans residues V1272–Y1292, I1329–L1349, V1375–T1397, G1417–V1437, W1438–I1458, I1531–F1551, I1571–M1591, Y1607–F1627, V1642–F1662, C1701–F1721, and S1770–L1790.

This sequence belongs to the glycosyltransferase 48 family. In terms of assembly, component of the 1,3-beta-glucan synthase (GS) complex, composed of at least the alternate catalytic subunits bgs1, bgs2, bgs3, and bgs4, and a regulatory subunit chr4.

The protein localises to the membrane. The catalysed reaction is [(1-&gt;3)-beta-D-glucosyl](n) + UDP-alpha-D-glucose = [(1-&gt;3)-beta-D-glucosyl](n+1) + UDP + H(+). Functionally, alternate catalytic subunit of the 1,3-beta-glucan synthase (GS) complex. Synthesizes 1,3-beta-glucan, a major structural component of the yeast cell wall. Required for cell wall biosynthesis and cell elongation. In Schizosaccharomyces pombe (strain 972 / ATCC 24843) (Fission yeast), this protein is 1,3-beta-glucan synthase component bgs3.